Here is a 256-residue protein sequence, read N- to C-terminus: Ribosomal RNA large subunit methyltransferase E (256 aa).

5 residues coordinate S-adenosyl-L-methionine: Gly48, Trp50, Asp68, Asp86, and Asp111. Lys151 (proton acceptor) is an active-site residue. Positions 198–256 (PVSPGDELDATVVDIGSEGDGIIKIDGYTLFVPGVENGDSVRVRVTDLKSNVGFAEVIE) constitute a TRAM domain.

The protein belongs to the class I-like SAM-binding methyltransferase superfamily. RNA methyltransferase RlmE family.

The protein localises to the cytoplasm. The catalysed reaction is uridine(2552) in 23S rRNA + S-adenosyl-L-methionine = 2'-O-methyluridine(2552) in 23S rRNA + S-adenosyl-L-homocysteine + H(+). Functionally, specifically methylates the uridine in position 2552 of 23S rRNA at the 2'-O position of the ribose in the fully assembled 50S ribosomal subunit. The protein is Ribosomal RNA large subunit methyltransferase E of Haloquadratum walsbyi (strain DSM 16790 / HBSQ001).